Consider the following 520-residue polypeptide: Ribonuclease Y (520 aa).

Residues 3 to 23 traverse the membrane as a helical segment; sequence IELAIIFIVLAAGAGFLIGNL. Residues 210 to 273 enclose the KH domain; it reads TVSVVALPSD…EVAKIALEKL (64 aa). Positions 336-429 constitute an HD domain; the sequence is VYQHSLEVAF…VQAADALSGA (94 aa).

Belongs to the RNase Y family.

It localises to the cell membrane. Endoribonuclease that initiates mRNA decay. The sequence is that of Ribonuclease Y from Geobacter sulfurreducens (strain ATCC 51573 / DSM 12127 / PCA).